The following is a 125-amino-acid chain: Mitochondrial import inner membrane translocase subunit tim16-A (125 aa).

A J-like region spans residues glutamate 58 to glutamate 110.

Belongs to the TIM16/PAM16 family. As to quaternary structure, probable component of the PAM complex at least composed of 1 mitochondrial HSP70 protein, 1 GRPE, 1 TIMM44, 1 TIMM16/PAM16 and 1 TIMM14. Associates with the TIM23 complex.

Its subcellular location is the mitochondrion inner membrane. In terms of biological role, regulates ATP-dependent protein translocation into the mitochondrial matrix. The chain is Mitochondrial import inner membrane translocase subunit tim16-A (pam16-a) from Xenopus laevis (African clawed frog).